We begin with the raw amino-acid sequence, 294 residues long: Fructose-bisphosphate aldolase class 1 (294 aa).

The active-site Proton acceptor is the Glu176. Catalysis depends on Lys213, which acts as the Schiff-base intermediate with dihydroxyacetone-P.

The protein belongs to the class I fructose-bisphosphate aldolase family.

The enzyme catalyses beta-D-fructose 1,6-bisphosphate = D-glyceraldehyde 3-phosphate + dihydroxyacetone phosphate. Its pathway is carbohydrate degradation; glycolysis; D-glyceraldehyde 3-phosphate and glycerone phosphate from D-glucose: step 4/4. This is Fructose-bisphosphate aldolase class 1 from Oceanobacillus iheyensis (strain DSM 14371 / CIP 107618 / JCM 11309 / KCTC 3954 / HTE831).